A 333-amino-acid chain; its full sequence is Uroporphyrinogen decarboxylase (333 aa).

Substrate contacts are provided by residues 22–26 (RQAGR), D71, Y145, S200, and H310.

Belongs to the uroporphyrinogen decarboxylase family. As to quaternary structure, homodimer.

The protein localises to the cytoplasm. It catalyses the reaction uroporphyrinogen III + 4 H(+) = coproporphyrinogen III + 4 CO2. It participates in porphyrin-containing compound metabolism; protoporphyrin-IX biosynthesis; coproporphyrinogen-III from 5-aminolevulinate: step 4/4. Functionally, catalyzes the decarboxylation of four acetate groups of uroporphyrinogen-III to yield coproporphyrinogen-III. The polypeptide is Uroporphyrinogen decarboxylase (Thermoplasma acidophilum (strain ATCC 25905 / DSM 1728 / JCM 9062 / NBRC 15155 / AMRC-C165)).